Consider the following 241-residue polypeptide: Proteasome subunit beta type-6 (241 aa).

Residues 1–19 (MATIASEYSSEASNTPIEH) constitute a propeptide that is removed on maturation.

Belongs to the peptidase T1B family. The 26S proteasome consists of a 20S proteasome core and two 19S regulatory subunits. The 20S proteasome core is composed of 28 subunits that are arranged in four stacked rings, resulting in a barrel-shaped structure. The two end rings are each formed by seven alpha subunits, and the two central rings are each formed by seven beta subunits. The catalytic chamber with the active sites is on the inside of the barrel.

It localises to the cytoplasm. The protein localises to the nucleus. Functionally, non-catalytic component of the proteasome which degrades poly-ubiquitinated proteins in the cytoplasm and in the nucleus. It is essential for the regulated turnover of proteins and for the removal of misfolded proteins. The proteasome is a multicatalytic proteinase complex that is characterized by its ability to cleave peptides with Arg, Phe, Tyr, Leu, and Glu adjacent to the leaving group at neutral or slightly basic pH. It has an ATP-dependent proteolytic activity. This Saccharomyces cerevisiae (strain ATCC 204508 / S288c) (Baker's yeast) protein is Proteasome subunit beta type-6 (PRE7).